Here is a 334-residue protein sequence, read N- to C-terminus: GTP 3',8-cyclase (334 aa).

A Radical SAM core domain is found at 11–236 (GFNRKIDYLR…ESTESSMGPA (226 aa)). Arginine 20 is a binding site for GTP. Residues cysteine 27 and cysteine 31 each contribute to the [4Fe-4S] cluster site. Tyrosine 33 is a binding site for S-adenosyl-L-methionine. Residue cysteine 34 participates in [4Fe-4S] cluster binding. A GTP-binding site is contributed by arginine 69. Residue glycine 73 participates in S-adenosyl-L-methionine binding. Position 100 (threonine 100) interacts with GTP. S-adenosyl-L-methionine is bound at residue serine 124. GTP is bound at residue lysine 161. Methionine 195 provides a ligand contact to S-adenosyl-L-methionine. [4Fe-4S] cluster-binding residues include cysteine 260 and cysteine 263. 265-267 (RVR) is a binding site for GTP. Cysteine 277 serves as a coordination point for [4Fe-4S] cluster.

Belongs to the radical SAM superfamily. MoaA family. Monomer and homodimer. Requires [4Fe-4S] cluster as cofactor.

The catalysed reaction is GTP + AH2 + S-adenosyl-L-methionine = (8S)-3',8-cyclo-7,8-dihydroguanosine 5'-triphosphate + 5'-deoxyadenosine + L-methionine + A + H(+). Its pathway is cofactor biosynthesis; molybdopterin biosynthesis. In terms of biological role, catalyzes the cyclization of GTP to (8S)-3',8-cyclo-7,8-dihydroguanosine 5'-triphosphate. The sequence is that of GTP 3',8-cyclase from Pseudomonas putida (strain ATCC 700007 / DSM 6899 / JCM 31910 / BCRC 17059 / LMG 24140 / F1).